Reading from the N-terminus, the 359-residue chain is Membrane-bound lytic murein transglycosylase C (359 aa).

A signal peptide spans 1–16 (MKKYLALALIAPLLIS). Cys-17 carries the N-palmitoyl cysteine lipid modification. The S-diacylglycerol cysteine moiety is linked to residue Cys-17.

This sequence belongs to the transglycosylase Slt family.

The protein localises to the cell outer membrane. The catalysed reaction is Exolytic cleavage of the (1-&gt;4)-beta-glycosidic linkage between N-acetylmuramic acid (MurNAc) and N-acetylglucosamine (GlcNAc) residues in peptidoglycan, from either the reducing or the non-reducing ends of the peptidoglycan chains, with concomitant formation of a 1,6-anhydrobond in the MurNAc residue.. In terms of biological role, murein-degrading enzyme. May play a role in recycling of muropeptides during cell elongation and/or cell division. In Escherichia coli O7:K1 (strain IAI39 / ExPEC), this protein is Membrane-bound lytic murein transglycosylase C.